We begin with the raw amino-acid sequence, 537 residues long: Atrial natriuretic peptide receptor 3 (537 aa).

Residues 1–20 (MPSLLVLTFSACVLLGWALL) form the signal peptide. The propeptide occupies 21-41 (ADCTGGGGSGGAGPGRGRRER). At 42-477 (EALPPQKIEV…PCKASGGLEE (436 aa)) the chain is on the extracellular side. N-linked (GlcNAc...) asparagine glycosylation is present at asparagine 82. Intrachain disulfides connect cysteine 104-cysteine 132 and cysteine 209-cysteine 257. Asparagine 289 and asparagine 390 each carry an N-linked (GlcNAc...) asparagine glycan. Residues 478 to 500 (SAVTGIVVGALLGAGLLMAFYFF) traverse the membrane as a helical segment. Residues 501–537 (RKKYRITIERRNQQEESNVGKHRELREDSIRSHFSVA) are Cytoplasmic-facing.

Belongs to the ANF receptor family. In terms of assembly, homodimer; disulfide-linked. Interacts with OSTN.

Its subcellular location is the cell membrane. Receptor for the natriuretic peptide hormones, binding with similar affinities atrial natriuretic peptide NPPA/ANP, brain natriuretic peptide NPPB/BNP, and C-type natriuretic peptide NPPC/CNP. May function as a clearance receptor for NPPA, NPPB and NPPC, regulating their local concentrations and effects. Acts as a regulator of osteoblast differentiation and bone growth by binding to its ligand osteocrin, thereby preventing binding between NPR3/NPR-C and natriuretic peptides, leading to increase cGMP production. In Bos taurus (Bovine), this protein is Atrial natriuretic peptide receptor 3 (NPR3).